Reading from the N-terminus, the 451-residue chain is Tubulin alpha-2 chain (451 aa).

Glutamine 11 provides a ligand contact to GTP. Lysine 40 is modified (N6-acetyllysine). The GTP site is built by glutamate 71, glycine 144, threonine 145, threonine 179, asparagine 206, and asparagine 228. Residue glutamate 71 participates in Mg(2+) binding. The active site involves glutamate 254.

Belongs to the tubulin family. Dimer of alpha and beta chains. A typical microtubule is a hollow water-filled tube with an outer diameter of 25 nm and an inner diameter of 15 nM. Alpha-beta heterodimers associate head-to-tail to form protofilaments running lengthwise along the microtubule wall with the beta-tubulin subunit facing the microtubule plus end conferring a structural polarity. Microtubules usually have 13 protofilaments but different protofilament numbers can be found in some organisms and specialized cells. Mg(2+) serves as cofactor. Post-translationally, undergoes a tyrosination/detyrosination cycle, the cyclic removal and re-addition of a C-terminal tyrosine residue by the enzymes tubulin tyrosine carboxypeptidase (TTCP) and tubulin tyrosine ligase (TTL), respectively.

It is found in the cytoplasm. The protein localises to the cytoskeleton. It catalyses the reaction GTP + H2O = GDP + phosphate + H(+). In terms of biological role, tubulin is the major constituent of microtubules, a cylinder consisting of laterally associated linear protofilaments composed of alpha- and beta-tubulin heterodimers. Microtubules grow by the addition of GTP-tubulin dimers to the microtubule end, where a stabilizing cap forms. Below the cap, tubulin dimers are in GDP-bound state, owing to GTPase activity of alpha-tubulin. This chain is Tubulin alpha-2 chain (TUBA2), found in Chlamydomonas reinhardtii (Chlamydomonas smithii).